The primary structure comprises 844 residues: Protein translocase subunit SecA 1 (844 aa).

ATP is bound by residues Gln91, 109–113 (GEGKT), and Asp498. A compositionally biased stretch (basic and acidic residues) spans 793–813 (KSKSFGEAKHVTAEDGKEKAK). A disordered region spans residues 793–825 (KSKSFGEAKHVTAEDGKEKAKPQPIVKGDQVGR). Zn(2+) contacts are provided by Cys829, Cys831, Cys840, and His841.

This sequence belongs to the SecA family. In terms of assembly, monomer and homodimer. Part of the essential Sec protein translocation apparatus which comprises SecA, SecYEG and auxiliary proteins SecDF. Other proteins may also be involved. Zn(2+) is required as a cofactor.

Its subcellular location is the cell membrane. It localises to the cytoplasm. It carries out the reaction ATP + H2O + cellular proteinSide 1 = ADP + phosphate + cellular proteinSide 2.. In terms of biological role, part of the Sec protein translocase complex. Interacts with the SecYEG preprotein conducting channel. Has a central role in coupling the hydrolysis of ATP to the transfer of proteins into and across the cell membrane, serving as an ATP-driven molecular motor driving the stepwise translocation of polypeptide chains across the membrane. The polypeptide is Protein translocase subunit SecA 1 (Staphylococcus epidermidis (strain ATCC 35984 / DSM 28319 / BCRC 17069 / CCUG 31568 / BM 3577 / RP62A)).